A 78-amino-acid chain; its full sequence is Putative protein PeaD (78 aa).

Belongs to the phage P protein family.

The sequence is that of Putative protein PeaD (peaD) from Escherichia coli (strain K12).